The sequence spans 34 residues: Trypsin inhibitor 2 (34 aa).

The cyclopeptide (Ser-Gly) cross-link spans 1–34 (SGSDGGVCPKILKKCRRDSDCPGACICRGNGYCG). A cross-link ((2-aminosuccinimidyl)acetic acid (Asp-Gly); alternate) is located at residues 4-5 (DG). The segment at residues 4-5 (DG) is a cross-link (isoaspartyl glycine isopeptide (Asp-Gly); alternate). Cystine bridges form between C8–C25, C15–C27, and C21–C33.

A cyclic succinimide probably forms by loss of water between Asp-4 and Gly-5, that can then rehydrate to either the original peptide bond or to a beta-aspartyl isopeptide bond. Three isoforms of MCoTI-II are detected, two with the parent molecular weight, corresponding to the unmodified and proposed isopeptide forms, and one with a molecular weight 18 Da lower, corresponding to a succinimide cross-linked form. Post-translationally, this is a cyclic peptide.

It localises to the secreted. In terms of biological role, inhibits trypsin; probably participates in a plant defense mechanism. The chain is Trypsin inhibitor 2 from Momordica cochinchinensis (Spiny bitter cucumber).